A 589-amino-acid chain; its full sequence is Actin-histidine N-methyltransferase (589 aa).

Positions methionine 1–proline 22 are disordered. Over residues glutamine 10–valine 20 the composition is skewed to polar residues. Residues arginine 75, glutamate 104–phenylalanine 106, arginine 254, aspartate 275–histidine 279, and serine 325–phenylalanine 327 contribute to the S-adenosyl-L-methionine site. The 221-residue stretch at glutamate 94 to glycine 314 folds into the SET domain. Serine 513 carries the phosphoserine modification. Residues leucine 547–glutamate 589 are disordered. The segment covering arginine 559–glutamate 589 has biased composition (basic and acidic residues).

The protein belongs to the class V-like SAM-binding methyltransferase superfamily. SETD3 actin-histidine methyltransferase family. As to quaternary structure, interacts with MYOD1. Post-translationally, phosphorylated by GSK3B, which is required for recognition by the SCF(FBXW7) complex and subsequent degradation. In terms of processing, ubiquitinated by the SCF(FBXW7) complex following phosphorylation by GSK3B, leading to its degradation by the proteasome.

It localises to the cytoplasm. Its subcellular location is the nucleus. It catalyses the reaction L-histidyl-[protein] + S-adenosyl-L-methionine = N(tele)-methyl-L-histidyl-[protein] + S-adenosyl-L-homocysteine + H(+). Protein-histidine N-methyltransferase that specifically mediates 3-methylhistidine (tele-methylhistidine) methylation of actin at 'His-73'. Histidine methylation of actin is required for smooth muscle contraction of the laboring uterus during delivery. Does not have protein-lysine N-methyltransferase activity and probably only catalyzes histidine methylation of actin. This Dasypus novemcinctus (Nine-banded armadillo) protein is Actin-histidine N-methyltransferase.